Consider the following 203-residue polypeptide: Superoxide dismutase [Mn] (203 aa).

His-27, His-81, Asp-164, and His-168 together coordinate Mn(2+).

It belongs to the iron/manganese superoxide dismutase family. In terms of assembly, homodimer. It depends on Mn(2+) as a cofactor.

It catalyses the reaction 2 superoxide + 2 H(+) = H2O2 + O2. Its function is as follows. Destroys superoxide anion radicals which are normally produced within the cells and which are toxic to biological systems. This chain is Superoxide dismutase [Mn] (sodA), found in Pseudomonas putida (Arthrobacter siderocapsulatus).